The following is a 300-amino-acid chain: Geranylgeranyl diphosphate synthase (300 aa).

The isopentenyl diphosphate site is built by lysine 50, arginine 53, and histidine 82. Mg(2+) contacts are provided by aspartate 89 and aspartate 95. (2E,6E)-farnesyl diphosphate is bound at residue arginine 100. Position 101 (arginine 101) interacts with isopentenyl diphosphate. Lysine 186, threonine 187, and glutamine 224 together coordinate (2E,6E)-farnesyl diphosphate.

Belongs to the FPP/GGPP synthase family. The cofactor is Mg(2+).

It is found in the plastid. The protein localises to the cyanelle. It carries out the reaction isopentenyl diphosphate + (2E,6E)-farnesyl diphosphate = (2E,6E,10E)-geranylgeranyl diphosphate + diphosphate. It functions in the pathway isoprenoid biosynthesis; geranylgeranyl diphosphate biosynthesis; geranylgeranyl diphosphate from farnesyl diphosphate and isopentenyl diphosphate: step 1/1. Its function is as follows. Catalyzes the condensation of farnesyl diphosphate (FPP) and isopentenyl diphosphate (IPP) to yield geranylgeranyl diphosphate (GGPP) needed for biosynthesis of carotenoids and diterpenes. The polypeptide is Geranylgeranyl diphosphate synthase (crtE) (Cyanophora paradoxa).